The sequence spans 400 residues: CCA-adding enzyme (400 aa).

2 residues coordinate ATP: G28 and R31. CTP contacts are provided by G28 and R31. The Mg(2+) site is built by D41 and D43. Residues R112, D155, R158, R161, and R164 each coordinate ATP. 5 residues coordinate CTP: R112, D155, R158, R161, and R164.

The protein belongs to the tRNA nucleotidyltransferase/poly(A) polymerase family. Bacterial CCA-adding enzyme type 3 subfamily. Homodimer. The cofactor is Mg(2+).

It catalyses the reaction a tRNA precursor + 2 CTP + ATP = a tRNA with a 3' CCA end + 3 diphosphate. It carries out the reaction a tRNA with a 3' CCA end + 2 CTP + ATP = a tRNA with a 3' CCACCA end + 3 diphosphate. Catalyzes the addition and repair of the essential 3'-terminal CCA sequence in tRNAs without using a nucleic acid template. Adds these three nucleotides in the order of C, C, and A to the tRNA nucleotide-73, using CTP and ATP as substrates and producing inorganic pyrophosphate. tRNA 3'-terminal CCA addition is required both for tRNA processing and repair. Also involved in tRNA surveillance by mediating tandem CCA addition to generate a CCACCA at the 3' terminus of unstable tRNAs. While stable tRNAs receive only 3'-terminal CCA, unstable tRNAs are marked with CCACCA and rapidly degraded. The chain is CCA-adding enzyme from Staphylococcus aureus (strain MSSA476).